We begin with the raw amino-acid sequence, 339 residues long: MYSFIRNCLFKLDAEVSHELSLDWLGAFERLHMLKPFALKVTPSPINVMGIDFPNRVGLAAGLDKNGDFVNALGQLGFGFVEIGTITPLAQSGNPKPRLFRLPEHQAIINRMGFNNKGVDHLVAQVQKRRYPGVLGINIGKNKITPEENALDDYVKCMDKVYAHADYITVNISSPNTPGLRNLQFGETLANLIAGIKQAQDRLAQTHDKYVPVAVKIAPDMTAEEIHSVADTLVNGNIDGVIATNTTISREAVQGHINADEAGGLSGLPVRDKSTEVIATLSAHLQGAMPIIGVGGIVEGADAQAKIAAGASLVQIYSGFIYKGPKLIAEAADAIASAG.

FMN contacts are provided by residues 61 to 65 (AGLDK) and T85. K65 serves as a coordination point for substrate. 110–114 (NRMGF) is a substrate binding site. Residues N138 and N171 each contribute to the FMN site. Position 171 (N171) interacts with substrate. S174 (nucleophile) is an active-site residue. Position 176 (N176) interacts with substrate. Residues K216 and T244 each contribute to the FMN site. 245–246 (NT) contacts substrate. FMN is bound by residues G267, G296, and 317-318 (YS).

It belongs to the dihydroorotate dehydrogenase family. Type 2 subfamily. As to quaternary structure, monomer. FMN serves as cofactor.

The protein resides in the cell membrane. It carries out the reaction (S)-dihydroorotate + a quinone = orotate + a quinol. It participates in pyrimidine metabolism; UMP biosynthesis via de novo pathway; orotate from (S)-dihydroorotate (quinone route): step 1/1. Functionally, catalyzes the conversion of dihydroorotate to orotate with quinone as electron acceptor. The polypeptide is Dihydroorotate dehydrogenase (quinone) (Saccharophagus degradans (strain 2-40 / ATCC 43961 / DSM 17024)).